Consider the following 379-residue polypeptide: Hydrogenase expression/formation protein HupD (379 aa).

Fe cation contacts are provided by C36, C64, and C67.

Belongs to the HypD family.

This is Hydrogenase expression/formation protein HupD (hupD) from Azotobacter chroococcum mcd 1.